Reading from the N-terminus, the 292-residue chain is 2-(5''-triphosphoribosyl)-3'-dephosphocoenzyme-A synthase (292 aa).

The protein belongs to the CitG/MdcB family.

The enzyme catalyses 3'-dephospho-CoA + ATP = 2'-(5''-triphospho-alpha-D-ribosyl)-3'-dephospho-CoA + adenine. Catalyzes the formation of 2-(5''-triphosphoribosyl)-3'-dephosphocoenzyme-A, the precursor of the prosthetic group of the holo-acyl carrier protein (gamma chain) of citrate lyase, from ATP and dephospho-CoA. The chain is 2-(5''-triphosphoribosyl)-3'-dephosphocoenzyme-A synthase from Escherichia coli (strain ATCC 8739 / DSM 1576 / NBRC 3972 / NCIMB 8545 / WDCM 00012 / Crooks).